A 428-amino-acid chain; its full sequence is Phosphoribosylamine--glycine ligase (428 aa).

Positions 107–313 constitute an ATP-grasp domain; that stretch reads KQVMKTYNIP…LVNVIESLLD (207 aa). Position 133 to 194 (133 to 194) interacts with ATP; the sequence is VEAEGVPIVI…EEYLEGEELS (62 aa). Mg(2+)-binding residues include glutamate 283 and asparagine 285.

The protein belongs to the GARS family. Mg(2+) serves as cofactor. It depends on Mn(2+) as a cofactor.

The enzyme catalyses 5-phospho-beta-D-ribosylamine + glycine + ATP = N(1)-(5-phospho-beta-D-ribosyl)glycinamide + ADP + phosphate + H(+). Its pathway is purine metabolism; IMP biosynthesis via de novo pathway; N(1)-(5-phospho-D-ribosyl)glycinamide from 5-phospho-alpha-D-ribose 1-diphosphate: step 2/2. This chain is Phosphoribosylamine--glycine ligase, found in Halalkalibacterium halodurans (strain ATCC BAA-125 / DSM 18197 / FERM 7344 / JCM 9153 / C-125) (Bacillus halodurans).